Reading from the N-terminus, the 336-residue chain is Antigen-presenting glycoprotein CD1d1 (336 aa).

A signal peptide spans 1–21 (MRYLPWLLLWAFLQVWGQSEA). The Extracellular portion of the chain corresponds to 22–305 (QQKNYTFRCL…YWDARQAPVG (284 aa)). N-linked (GlcNAc...) asparagine glycans are attached at residues asparagine 25, asparagine 38, and asparagine 60. Aspartate 98 provides a ligand contact to a D-galactosylceramide. 2 cysteine pairs are disulfide-bonded: cysteine 122-cysteine 186 and cysteine 226-cysteine 281. Asparagine 128 carries an N-linked (GlcNAc...) asparagine glycan. 171-174 (DQGT) is an a D-galactosylceramide binding site. N-linked (GlcNAc...) asparagine glycosylation is present at asparagine 183. Positions 207 to 297 (PVAWLSSVPS…LGGQDIILYW (91 aa)) constitute an Ig-like domain. Residues 306–326 (LIVFIVLIMLVVVGAVVYYIW) form a helical membrane-spanning segment. At 327 to 336 (RRRSAYQDIR) the chain is on the cytoplasmic side. The Internalization signal signature appears at 332 to 335 (YQDI).

As to quaternary structure, heterodimer with B2M (beta-2-microglobulin). Interacts with MHC II and CD74. Post-translationally, N-glycosylated. Expressed on cortical thymocytes, on certain T-cell leukemias, and in various other tissues.

It is found in the cell membrane. It localises to the endosome membrane. The protein localises to the lysosome membrane. Its function is as follows. Antigen-presenting protein that binds self and non-self glycolipids and presents them to T-cell receptors on natural killer T-cells. This chain is Antigen-presenting glycoprotein CD1d1 (Cd1d1), found in Mus musculus (Mouse).